The primary structure comprises 270 residues: UPF0354 protein BC_4690 (270 aa).

The protein belongs to the UPF0354 family.

The chain is UPF0354 protein BC_4690 from Bacillus cereus (strain ATCC 14579 / DSM 31 / CCUG 7414 / JCM 2152 / NBRC 15305 / NCIMB 9373 / NCTC 2599 / NRRL B-3711).